Consider the following 557-residue polypeptide: Formate--tetrahydrofolate ligase 1 (557 aa).

66–73 (TPAGEGKT) provides a ligand contact to ATP.

Belongs to the formate--tetrahydrofolate ligase family.

The enzyme catalyses (6S)-5,6,7,8-tetrahydrofolate + formate + ATP = (6R)-10-formyltetrahydrofolate + ADP + phosphate. It functions in the pathway one-carbon metabolism; tetrahydrofolate interconversion. The protein is Formate--tetrahydrofolate ligase 1 of Streptococcus sanguinis (strain SK36).